A 286-amino-acid chain; its full sequence is ATP synthase gamma chain (286 aa).

This sequence belongs to the ATPase gamma chain family. In terms of assembly, F-type ATPases have 2 components, CF(1) - the catalytic core - and CF(0) - the membrane proton channel. CF(1) has five subunits: alpha(3), beta(3), gamma(1), delta(1), epsilon(1). CF(0) has three main subunits: a, b and c.

The protein localises to the cell inner membrane. Produces ATP from ADP in the presence of a proton gradient across the membrane. The gamma chain is believed to be important in regulating ATPase activity and the flow of protons through the CF(0) complex. The chain is ATP synthase gamma chain from Pseudomonas fluorescens (strain Pf0-1).